The chain runs to 782 residues: Coiled-coil alpha-helical rod protein 1 (782 aa).

Composition is skewed to basic and acidic residues over residues 62–74 and 208–218; these read ERDV…EPGR and ETRRAGEAKEL. Disordered stretches follow at residues 62-82 and 191-218; these read ERDV…WGLE and SSLT…AKEL. 3 coiled-coil regions span residues 82-314, 344-435, and 498-691; these read EGSQ…ELTR, LMVQ…VVNA, and VADV…QQEG.

Its subcellular location is the cytoplasm. It is found in the nucleus. Functionally, may be a regulator of keratinocyte proliferation or differentiation. The chain is Coiled-coil alpha-helical rod protein 1 (CCHCR1) from Pongo pygmaeus (Bornean orangutan).